Reading from the N-terminus, the 151-residue chain is Transcriptional repressor NrdR (151 aa).

The disordered stretch occupies residues 1-24 (MRCPKCQHNGTRVLDSRPSDESRS). A zinc finger spans residues 3–34 (CPKCQHNGTRVLDSRPSDESRSIKRRRECEKC). A compositionally biased stretch (basic and acidic residues) spans 14–24 (LDSRPSDESRS). The region spanning 49–139 (LLIIKKDGMR…VYRQFKDINV (91 aa)) is the ATP-cone domain.

The protein belongs to the NrdR family. Requires Zn(2+) as cofactor.

Its function is as follows. Negatively regulates transcription of bacterial ribonucleotide reductase nrd genes and operons by binding to NrdR-boxes. This chain is Transcriptional repressor NrdR, found in Shouchella clausii (strain KSM-K16) (Alkalihalobacillus clausii).